The chain runs to 189 residues: Elongation factor P (189 aa).

This sequence belongs to the elongation factor P family.

The protein resides in the cytoplasm. It participates in protein biosynthesis; polypeptide chain elongation. Functionally, involved in peptide bond synthesis. Stimulates efficient translation and peptide-bond synthesis on native or reconstituted 70S ribosomes in vitro. Probably functions indirectly by altering the affinity of the ribosome for aminoacyl-tRNA, thus increasing their reactivity as acceptors for peptidyl transferase. This is Elongation factor P from Campylobacter fetus subsp. fetus (strain 82-40).